Reading from the N-terminus, the 657-residue chain is Probable cytochrome P450 556A1 (657 aa).

Residues F2–I24 form a helical membrane-spanning segment. Positions R440 to N486 are disordered. Positions N446–N486 are enriched in low complexity. C587 provides a ligand contact to heme.

This sequence belongs to the cytochrome P450 family. The cofactor is heme.

The protein localises to the membrane. The sequence is that of Probable cytochrome P450 556A1 (cyp556A1) from Dictyostelium discoideum (Social amoeba).